We begin with the raw amino-acid sequence, 400 residues long: S-adenosylmethionine synthase (400 aa).

ATP is bound at residue 136-141 (GQGSVD).

It belongs to the AdoMet synthase 2 family. Mg(2+) is required as a cofactor.

The enzyme catalyses L-methionine + ATP + H2O = S-adenosyl-L-methionine + phosphate + diphosphate. It participates in amino-acid biosynthesis; S-adenosyl-L-methionine biosynthesis; S-adenosyl-L-methionine from L-methionine: step 1/1. Its function is as follows. Catalyzes the formation of S-adenosylmethionine from methionine and ATP. The polypeptide is S-adenosylmethionine synthase (mat) (Thermoplasma acidophilum (strain ATCC 25905 / DSM 1728 / JCM 9062 / NBRC 15155 / AMRC-C165)).